A 152-amino-acid chain; its full sequence is Large ribosomal subunit protein uL15 (152 aa).

Polar residues predominate over residues 1–12; that stretch reads MTSTLNTLKSNT. Residues 1–57 are disordered; that stretch reads MTSTLNTLKSNTGSRKKKLRKGRGIAAGQGASCGFGMRGQKSRSGRPTRPGFEGGQM. Residues 14–23 show a composition bias toward basic residues; the sequence is SRKKKLRKGR. The span at 25-37 shows a compositional bias: gly residues; sequence IAAGQGASCGFGM.

The protein belongs to the universal ribosomal protein uL15 family. In terms of assembly, part of the 50S ribosomal subunit.

Functionally, binds to the 23S rRNA. The polypeptide is Large ribosomal subunit protein uL15 (Prochlorococcus marinus subsp. pastoris (strain CCMP1986 / NIES-2087 / MED4)).